A 562-amino-acid chain; its full sequence is NAD-dependent malic enzyme (562 aa).

Residue Tyr101 is the Proton donor of the active site. An NAD(+)-binding site is contributed by Arg154. Catalysis depends on Lys172, which acts as the Proton acceptor. A divalent metal cation is bound by residues Glu243, Asp244, and Asp267. NAD(+)-binding residues include Asp267 and Asn415.

This sequence belongs to the malic enzymes family. Homotetramer. Mg(2+) is required as a cofactor. The cofactor is Mn(2+).

The enzyme catalyses (S)-malate + NAD(+) = pyruvate + CO2 + NADH. It catalyses the reaction oxaloacetate + H(+) = pyruvate + CO2. The sequence is that of NAD-dependent malic enzyme from Shewanella sediminis (strain HAW-EB3).